The sequence spans 369 residues: Ribonuclease D (369 aa).

Residues 4-168 (EIITTTAQLH…CLEKLQQQLE (165 aa)) form the 3'-5' exonuclease domain. The HRDC domain maps to 207-286 (DRQGLAIIKA…TQVISQDEST (80 aa)).

Belongs to the RNase D family. The cofactor is a divalent metal cation.

The protein localises to the cytoplasm. It carries out the reaction Exonucleolytic cleavage that removes extra residues from the 3'-terminus of tRNA to produce 5'-mononucleotides.. In terms of biological role, exonuclease involved in the 3' processing of various precursor tRNAs. Initiates hydrolysis at the 3'-terminus of an RNA molecule and releases 5'-mononucleotides. This chain is Ribonuclease D, found in Psychromonas ingrahamii (strain DSM 17664 / CCUG 51855 / 37).